The following is a 1036-amino-acid chain: Hexagonally packed intermediate-layer surface protein (1036 aa).

The signal sequence occupies residues 1–17; sequence MKKNIALMALTGVLTLA. 3 disulfides stabilise this stretch: Cys74–Cys86, Cys256–Cys275, and Cys642–Cys754.

Post-translationally, glycosylated; contains six glycans. Acylated in the N-terminal region. In terms of processing, the N-terminus is blocked.

Its subcellular location is the secreted. The protein resides in the cell wall. It localises to the S-layer. Shape maintenance, possible protection from noxious enzymes or exogenous and unsettling DNA, and may mediate homotypic cell-cell contacts. The protein is Hexagonally packed intermediate-layer surface protein (hpi) of Deinococcus radiodurans.